Reading from the N-terminus, the 384-residue chain is S-adenosylmethionine synthase (384 aa).

An ATP-binding site is contributed by H15. D17 serves as a coordination point for Mg(2+). Residue E43 participates in K(+) binding. 2 residues coordinate L-methionine: E56 and Q99. The interval 99–109 (QSPDINQGVDR) is flexible loop. ATP contacts are provided by residues 164–166 (DAK), 230–231 (RF), D239, 245–246 (RK), A262, and K266. Residue D239 participates in L-methionine binding. K270 serves as a coordination point for L-methionine.

Belongs to the AdoMet synthase family. Homotetramer; dimer of dimers. The cofactor is Mg(2+). It depends on K(+) as a cofactor.

Its subcellular location is the cytoplasm. It carries out the reaction L-methionine + ATP + H2O = S-adenosyl-L-methionine + phosphate + diphosphate. The protein operates within amino-acid biosynthesis; S-adenosyl-L-methionine biosynthesis; S-adenosyl-L-methionine from L-methionine: step 1/1. Functionally, catalyzes the formation of S-adenosylmethionine (AdoMet) from methionine and ATP. The overall synthetic reaction is composed of two sequential steps, AdoMet formation and the subsequent tripolyphosphate hydrolysis which occurs prior to release of AdoMet from the enzyme. In Serratia proteamaculans (strain 568), this protein is S-adenosylmethionine synthase.